Reading from the N-terminus, the 454-residue chain is Zinc finger CCCH domain-containing protein 66 (454 aa).

Over residues 1–23 (MAAGAGAGGGGGEGDSNGGGTSP) the composition is skewed to gly residues. A disordered region spans residues 1 to 30 (MAAGAGAGGGGGEGDSNGGGTSPGGVSAAA). 5 consecutive C3H1-type zinc fingers follow at residues 66 to 94 (RIGEPDCSYYMRTGLCRFGMTCKFNHPPN), 111 to 139 (RVGQPECQYYLKTGTCKFGATCKFHHPRE), 157 to 185 (RPNEKECAYYLRTGQCKFASTCKFHHPQP), 318 to 346 (RPDQPECQFYMKTGDCKFGAVCKFHHPKE), and 364 to 392 (RPGEPVCTFYSRYGICKFGPNCKFDHPMG). The tract at residues 405–454 (DVSSMHYQLSPSPGHPGILLDGGSGRSHRVPQSDSQQIPSGDGNAEREAS) is disordered. Over residues 434-443 (VPQSDSQQIP) the composition is skewed to polar residues.

The chain is Zinc finger CCCH domain-containing protein 66 from Oryza sativa subsp. japonica (Rice).